We begin with the raw amino-acid sequence, 143 residues long: Large ribosomal subunit protein uL11 (143 aa).

Belongs to the universal ribosomal protein uL11 family. As to quaternary structure, part of the ribosomal stalk of the 50S ribosomal subunit. Interacts with L10 and the large rRNA to form the base of the stalk. L10 forms an elongated spine to which L12 dimers bind in a sequential fashion forming a multimeric L10(L12)X complex. One or more lysine residues are methylated.

Functionally, forms part of the ribosomal stalk which helps the ribosome interact with GTP-bound translation factors. The chain is Large ribosomal subunit protein uL11 from Methylibium petroleiphilum (strain ATCC BAA-1232 / LMG 22953 / PM1).